The sequence spans 73 residues: Cell division protein ZapB (73 aa).

Residues 3–67 (LELLSKLETK…WNDKVTGLVG (65 aa)) are a coiled coil.

This sequence belongs to the ZapB family. In terms of assembly, homodimer. The ends of the coiled-coil dimer bind to each other, forming polymers. Interacts with FtsZ.

It is found in the cytoplasm. Non-essential, abundant cell division factor that is required for proper Z-ring formation. It is recruited early to the divisome by direct interaction with FtsZ, stimulating Z-ring assembly and thereby promoting cell division earlier in the cell cycle. Its recruitment to the Z-ring requires functional FtsA or ZipA. This Shewanella sp. (strain ANA-3) protein is Cell division protein ZapB.